The chain runs to 138 residues: Spermatid nuclear transition protein 4 (138 aa).

A compositionally biased stretch (basic and acidic residues) spans Ala1–Arg11. The interval Ala1–Tyr138 is disordered. Residue Ser4 is modified to Phosphoserine; by PKC. The short motif at Arg5 to Arg23 is the Nuclear localization signal element. 3 stretches are compositionally biased toward basic residues: residues Arg19–Gly34, Met43–Ile57, and Lys65–Phe74. Position 26 is a phosphothreonine; by PKA (Thr26). Residues Arg54 to Lys72 carry the Nuclear localization signal motif. Positions Asn86–Gln101 are enriched in low complexity. The span at Pro120–Val131 shows a compositional bias: polar residues.

It is found in the nucleus. The protein resides in the chromosome. Functionally, involved in nuclear basic protein transition: histones are replaced by spermatid specific proteins which are themselves replaced by protamines in late spermatids. The protein is Spermatid nuclear transition protein 4 (TNP4) of Sus scrofa (Pig).